A 154-amino-acid chain; its full sequence is Myoglobin (154 aa).

The 147-residue stretch at 2 to 148 (GLSDQEWQQV…FRNDMASKYK (147 aa)) folds into the Globin domain. Histidine 65 serves as a coordination point for nitrite. Histidine 65 contributes to the O2 binding site. Histidine 94 contacts heme b.

This sequence belongs to the globin family. Monomeric.

The protein resides in the cytoplasm. It is found in the sarcoplasm. The catalysed reaction is Fe(III)-heme b-[protein] + nitric oxide + H2O = Fe(II)-heme b-[protein] + nitrite + 2 H(+). It catalyses the reaction H2O2 + AH2 = A + 2 H2O. Its function is as follows. Monomeric heme protein which primary function is to store oxygen and facilitate its diffusion within muscle tissues. Reversibly binds oxygen through a pentacoordinated heme iron and enables its timely and efficient release as needed during periods of heightened demand. Depending on the oxidative conditions of tissues and cells, and in addition to its ability to bind oxygen, it also has a nitrite reductase activity whereby it regulates the production of bioactive nitric oxide. Under stress conditions, like hypoxia and anoxia, it also protects cells against reactive oxygen species thanks to its pseudoperoxidase activity. This chain is Myoglobin (MB), found in Anas poecilorhyncha (Indian spot-billed duck).